We begin with the raw amino-acid sequence, 111 residues long: UPF0145 protein BRADO6695 (111 aa).

The protein belongs to the UPF0145 family.

The protein is UPF0145 protein BRADO6695 of Bradyrhizobium sp. (strain ORS 278).